We begin with the raw amino-acid sequence, 215 residues long: Probable transaldolase (215 aa).

Lysine 83 acts as the Schiff-base intermediate with substrate in catalysis.

Belongs to the transaldolase family. Type 3B subfamily.

It localises to the cytoplasm. The catalysed reaction is D-sedoheptulose 7-phosphate + D-glyceraldehyde 3-phosphate = D-erythrose 4-phosphate + beta-D-fructose 6-phosphate. Its pathway is carbohydrate degradation; pentose phosphate pathway; D-glyceraldehyde 3-phosphate and beta-D-fructose 6-phosphate from D-ribose 5-phosphate and D-xylulose 5-phosphate (non-oxidative stage): step 2/3. In terms of biological role, transaldolase is important for the balance of metabolites in the pentose-phosphate pathway. The protein is Probable transaldolase of Methanococcus maripaludis (strain C7 / ATCC BAA-1331).